The chain runs to 553 residues: Cytokine-like nuclear factor N-PAC (553 aa).

The PWWP domain occupies 8 to 66; it reads LGDLVWGKLGRYPPWPGKIVNPPKDLKKPRGKKCFFVKFFGTEDHAWIKVEQLKPYHAH. Basic and acidic residues-rich tracts occupy residues 92–145 and 162–182; these read RAKG…EGKK and RAQE…KDLS. The segment at 92-190 is disordered; that stretch reads RAKGKDQTSS…LSIPESSTVK (99 aa). Phosphoserine is present on S130. Residue K135 forms a Glycyl lysine isopeptide (Lys-Gly) (interchain with G-Cter in SUMO2) linkage. At S167 the chain carries Phosphoserine. Positions 168-180 form a DNA-binding region, a.T hook; sequence PRKRGRPPKDEKD. Glycyl lysine isopeptide (Lys-Gly) (interchain with G-Cter in SUMO2) cross-links involve residues K176, K179, K201, and K211. The segment at 214 to 217 is interaction with histone H3; it reads DPHF. Positions 216–225 are interaction with KDM1B; sequence HFHHFLLSQT. Glycyl lysine isopeptide (Lys-Gly) (interchain with G-Cter in SUMO2) cross-links involve residues K227, K237, K240, and K269. The dehydrogenase domain stretch occupies residues 261 to 553; that stretch reads GSVTPTDKKI…MSAVYRAYIH (293 aa). Position 271 to 285 (271 to 285) interacts with NAD(+); sequence GFLGLGLMGSGIVSN. Residue K302 forms a Glycyl lysine isopeptide (Lys-Gly) (interchain with G-Cter in SUMO2) linkage. Residues T362 and K505 each coordinate NAD(+). Position 540 is a phosphoserine (S540).

Belongs to the HIBADH-related family. NP60 subfamily. Homotetramere. Interacts with MAPK14. Interacts with KDM1B at nucleosomes; this interaction stimulates H3K4me1 and H3K4me2 demethylation. Binds to mononucleosomes. Interacts with GATA4; the interaction is required for a synergistic activation of GATA4 target genes transcription.

The protein resides in the nucleus. It is found in the chromosome. Cytokine-like nuclear factor with chromatin gene reader activity involved in chromatin modification and regulation of gene expression. Acts as a nucleosome-destabilizing factor that is recruited to genes during transcriptional activation. Recognizes and binds histone H3 without a preference for specific epigenetic markers and also binds DNA. Interacts with KDM1B and promotes its histone demethylase activity by facilitating the capture of H3 tails, they form a multifunctional enzyme complex that modifies transcribed chromatin and facilitates Pol II transcription through nucleosomes. Stimulates the acetylation of 'Lys-56' of nucleosomal histone H3 (H3K56ac) by EP300. With GATA4, co-binds a defined set of heart development genes and coregulates their expression during cardiomyocyte differentiation. Regulates p38 MAP kinase activity by mediating stress activation of MAPK14/p38alpha and specifically regulating MAPK14 signaling. Indirectly promotes phosphorylation of MAPK14 and activation of ATF2. The phosphorylation of MAPK14 requires upstream activity of MAP2K4 and MAP2K6. The sequence is that of Cytokine-like nuclear factor N-PAC (GLYR1) from Bos taurus (Bovine).